A 90-amino-acid chain; its full sequence is Protein Z600 (90 aa).

Thr22 and Thr48 each carry phosphothreonine. The segment at 46–65 is disordered; sequence PATPSSSGHGKFQTELKKRR.

In terms of assembly, component of the Frs-CycA-Cdk1 complex composed of Z600, CycA and Cdk1. Interacts preferentially with CycA (via C-terminus) but is also able to interact (via C-terminus) with CycE (via C-terminus).

Its subcellular location is the nucleus. Functionally, cell cycle regulator that is involved in modulating and adjusting cell proliferation according to the requirements of the developmental program. Interacts with mitotic Cdk1-cyclin complexes to inhibit mitotic entry at the G2/M transition. Likely to function by binding to the hydrophobic patch of cyclins to interfere with the interaction between the complex and certain Cdk1 substrates. At the mid-blastula transition, involved in the cell cycle arrest in G2 of cycle 14 by delaying mitosis and thus reducing cell proliferation allowing cell fate specification and morphogenesis to take place. Acts downstream or in parallel to the checkpoint regulator grp which is also required for the cell cycle pause at cycle 14. During gastrulation, delays mitosis in the ventral region of the embryonic mesoderm thus allowing invagination to be completed before cell division takes place. The chain is Protein Z600 from Drosophila melanogaster (Fruit fly).